Reading from the N-terminus, the 308-residue chain is Transaldolase (308 aa).

Lysine 125 acts as the Schiff-base intermediate with substrate in catalysis.

The protein belongs to the transaldolase family. Type 1 subfamily. As to quaternary structure, homodimer.

It localises to the cytoplasm. The enzyme catalyses D-sedoheptulose 7-phosphate + D-glyceraldehyde 3-phosphate = D-erythrose 4-phosphate + beta-D-fructose 6-phosphate. It participates in carbohydrate degradation; pentose phosphate pathway; D-glyceraldehyde 3-phosphate and beta-D-fructose 6-phosphate from D-ribose 5-phosphate and D-xylulose 5-phosphate (non-oxidative stage): step 2/3. Transaldolase is important for the balance of metabolites in the pentose-phosphate pathway. The sequence is that of Transaldolase from Pseudomonas savastanoi pv. phaseolicola (strain 1448A / Race 6) (Pseudomonas syringae pv. phaseolicola (strain 1448A / Race 6)).